A 210-amino-acid chain; its full sequence is Peptidyl-tRNA hydrolase (210 aa).

Y14 is a tRNA binding site. Residue H19 is the Proton acceptor of the active site. 3 residues coordinate tRNA: F64, N66, and N112.

Belongs to the PTH family. In terms of assembly, monomer.

Its subcellular location is the cytoplasm. The catalysed reaction is an N-acyl-L-alpha-aminoacyl-tRNA + H2O = an N-acyl-L-amino acid + a tRNA + H(+). Functionally, hydrolyzes ribosome-free peptidyl-tRNAs (with 1 or more amino acids incorporated), which drop off the ribosome during protein synthesis, or as a result of ribosome stalling. Its function is as follows. Catalyzes the release of premature peptidyl moieties from peptidyl-tRNA molecules trapped in stalled 50S ribosomal subunits, and thus maintains levels of free tRNAs and 50S ribosomes. The polypeptide is Peptidyl-tRNA hydrolase (Methylorubrum extorquens (strain CM4 / NCIMB 13688) (Methylobacterium extorquens)).